The sequence spans 2555 residues: Plipastatin synthase subunit C (2555 aa).

The tract at residues 7–306 (IQDIYPLSFM…NTIPIRAQSD (300 aa)) is condensation 1. The tract at residues 491–894 (TYAELDMYAS…SIEGVREAAV (404 aa)) is adenylation 1. The 76-residue stretch at 967-1042 (APRNVTEMKL…GLATVIREGT (76 aa)) folds into the Carrier 1 domain. Residue Ser1002 is modified to O-(pantetheine 4'-phosphoryl)serine. The segment at 1054–1344 (KQETYPVSSA…NTLALRTRPE (291 aa)) is condensation 2. An adenylation 2 region spans residues 1532-1927 (TYEDLNSWAN…QIDGVKEAAV (396 aa)). The Carrier 2 domain occupies 2003-2077 (PPRNELEEQL…DLSPFIRKSE (75 aa)). Ser2038 carries the O-(pantetheine 4'-phosphoryl)serine modification. Positions 2085 to 2548 (IQGDVPWTPV…SLTAEDLDSI (464 aa)) are epimerization 3.

It belongs to the ATP-dependent AMP-binding enzyme family. It depends on pantetheine 4'-phosphate as a cofactor.

In terms of biological role, this protein is a multifunctional enzyme, able to activate and polymerize the amino acids Glu and Ala/Val as part of the biosynthesis of the lipopeptide antibiotic plipastatin. The Ala/Val residue is further epimerized to the D-isomer form. The activation sites for these amino acids consist of individual domains. This is Plipastatin synthase subunit C (ppsC) from Bacillus subtilis (strain 168).